The following is a 496-amino-acid chain: Beta-amylase (496 aa).

Residues Asp-54, His-94, and Asp-102 each coordinate substrate. Glu-187 acts as the Proton donor in catalysis. Substrate-binding residues include Lys-296, His-301, and Thr-343. The Proton acceptor role is filled by Glu-381. Substrate is bound by residues Asn-382–Ala-383 and Arg-421.

It belongs to the glycosyl hydrolase 14 family.

The enzyme catalyses Hydrolysis of (1-&gt;4)-alpha-D-glucosidic linkages in polysaccharides so as to remove successive maltose units from the non-reducing ends of the chains.. In Vigna unguiculata (Cowpea), this protein is Beta-amylase (BMY1).